The chain runs to 1279 residues: ATP-dependent helicase/nuclease subunit A (1279 aa).

In terms of domain architecture, UvrD-like helicase ATP-binding spans 4-499 (TKWTDEQRQA…VKLFKNFRSR (496 aa)). Residue 25 to 32 (AGAGAGKT) coordinates ATP. One can recognise a UvrD-like helicase C-terminal domain in the interval 526–853 (EEALKVGASY…RIMSIHKSKG (328 aa)).

This sequence belongs to the helicase family. AddA subfamily. In terms of assembly, heterodimer of AddA and AddB/RexB. Mg(2+) is required as a cofactor.

It catalyses the reaction Couples ATP hydrolysis with the unwinding of duplex DNA by translocating in the 3'-5' direction.. It carries out the reaction ATP + H2O = ADP + phosphate + H(+). Its function is as follows. The heterodimer acts as both an ATP-dependent DNA helicase and an ATP-dependent, dual-direction single-stranded exonuclease. Recognizes the chi site generating a DNA molecule suitable for the initiation of homologous recombination. The AddA nuclease domain is required for chi fragment generation; this subunit has the helicase and 3' -&gt; 5' nuclease activities. This Clostridium botulinum (strain Langeland / NCTC 10281 / Type F) protein is ATP-dependent helicase/nuclease subunit A.